Here is a 243-residue protein sequence, read N- to C-terminus: Small ribosomal subunit protein uS3 (243 aa).

One can recognise a KH type-2 domain in the interval 39 to 110 (IRTFIEKKYG…QVRINVVEVE (72 aa)). A disordered region spans residues 216-243 (QTIPVGANPKRKASRRPQQFEDRSNENS). Positions 233-243 (QQFEDRSNENS) are enriched in basic and acidic residues.

This sequence belongs to the universal ribosomal protein uS3 family. Part of the 30S ribosomal subunit. Forms a tight complex with proteins S10 and S14.

In terms of biological role, binds the lower part of the 30S subunit head. Binds mRNA in the 70S ribosome, positioning it for translation. The polypeptide is Small ribosomal subunit protein uS3 (Prochlorococcus marinus (strain MIT 9215)).